Consider the following 235-residue polypeptide: Probable WRKY transcription factor 66 (235 aa).

Residues 79–147 (SPTPAHIDGF…YVGQHACEAP (69 aa)) constitute a DNA-binding region (WRKY).

The protein belongs to the WRKY group III family.

It is found in the nucleus. Its function is as follows. Transcription factor. Interacts specifically with the W box (5'-(T)TGAC[CT]-3'), a frequently occurring elicitor-responsive cis-acting element. This chain is Probable WRKY transcription factor 66 (WRKY66), found in Arabidopsis thaliana (Mouse-ear cress).